The following is a 58-amino-acid chain: uncharacterized protein (58 aa).

This is an uncharacterized protein from Phaseolus vulgaris (Kidney bean).